Reading from the N-terminus, the 232-residue chain is RNA chaperone ProQ (232 aa).

A disordered region spans residues 105 to 182 (EAKARVQAQR…REEQHTPVSD (78 aa)). A compositionally biased stretch (basic and acidic residues) spans 117 to 136 (QQAKKREAAAAAGEKEDAPR). The span at 137 to 146 (RERKPRPTTP) shows a compositional bias: basic residues. Over residues 147–177 (RRKEGAERKPRAQKPVEKAPKTVKAPREEQH) the composition is skewed to basic and acidic residues.

Belongs to the ProQ family.

The protein localises to the cytoplasm. RNA chaperone with significant RNA binding, RNA strand exchange and RNA duplexing activities. May regulate ProP activity through an RNA-based, post-transcriptional mechanism. The chain is RNA chaperone ProQ from Shigella flexneri serotype 5b (strain 8401).